A 159-amino-acid polypeptide reads, in one-letter code: Dihydrofolate reductase (159 aa).

Residues 1–158 (MISLIAALAV…HSYCFEILER (158 aa)) form the DHFR domain. A substrate-binding site is contributed by isoleucine 5. NADP(+) is bound by residues alanine 7 and 13–19 (VIGMENA). Aspartate 27 provides a ligand contact to substrate. 45-46 (HT) lines the NADP(+) pocket. Arginine 52 and arginine 57 together coordinate substrate. NADP(+) contacts are provided by residues 63–64 (SS), lysine 76, and 95–102 (GGGRVYEQ). Threonine 113 contacts substrate.

The protein belongs to the dihydrofolate reductase family.

It catalyses the reaction (6S)-5,6,7,8-tetrahydrofolate + NADP(+) = 7,8-dihydrofolate + NADPH + H(+). The protein operates within cofactor biosynthesis; tetrahydrofolate biosynthesis; 5,6,7,8-tetrahydrofolate from 7,8-dihydrofolate: step 1/1. Key enzyme in folate metabolism. Catalyzes an essential reaction for de novo glycine and purine synthesis, and for DNA precursor synthesis. In Escherichia coli O6:H1 (strain CFT073 / ATCC 700928 / UPEC), this protein is Dihydrofolate reductase (folA).